The sequence spans 637 residues: Nuclear receptor subfamily 2 group C member 1-A (637 aa).

A DNA-binding region (nuclear receptor) is located at residues 149–224; sequence VELCVVCGDK…LGMKQDSVQC (76 aa). 2 consecutive NR C4-type zinc fingers follow at residues 152–172 and 188–207; these read CVVCGDKASGRHYGAVTCEGC and CRGSKDCVINKHYRNRCQYC. Positions 383 to 624 constitute an NR LBD domain; sequence CLGSNANLLH…SIIPYILRME (242 aa).

This sequence belongs to the nuclear hormone receptor family. NR2 subfamily.

The protein resides in the nucleus. Functionally, orphan nuclear receptor. Binds the IR7 element in the promoter of its own gene in an autoregulatory negative feedback mechanism. Primarily repressor of a broad range of genes. Binds to hormone response elements (HREs) consisting of two 5'-AGGTCA-3' half site direct repeat consensus sequences. This Xenopus laevis (African clawed frog) protein is Nuclear receptor subfamily 2 group C member 1-A (nr2c1-a).